Here is a 300-residue protein sequence, read N- to C-terminus: MQALYDLPAPAKLNLFLHIIGRRADGYHLIESVFMLIDWCDTLHFECRADGAISRQDLGAPLPAADLSIRAAHALRAATGCRQGAHIGLLKRLPAQAGIGGGSSDAATTLLALNRLWGLGLSLSALEKIGVTLGADVPFFVRGRNARVAGIGEIITPLAHGQLPPACFAVVKPAAGLETKAIFSSPLLKRASGSATISGFAAADFGRDGDCYQDADFCRNDLQPVAQALCPEVTQAIEWLRARGLQGRMTGSGSAVFAQIPQAPDLGHVGDLGAAPEGWQVRVCENLMLHPLAGWAADED.

The active site involves K12. 94-104 (PAQAGIGGGSS) provides a ligand contact to ATP. Residue D136 is part of the active site.

This sequence belongs to the GHMP kinase family. IspE subfamily.

It catalyses the reaction 4-CDP-2-C-methyl-D-erythritol + ATP = 4-CDP-2-C-methyl-D-erythritol 2-phosphate + ADP + H(+). It participates in isoprenoid biosynthesis; isopentenyl diphosphate biosynthesis via DXP pathway; isopentenyl diphosphate from 1-deoxy-D-xylulose 5-phosphate: step 3/6. In terms of biological role, catalyzes the phosphorylation of the position 2 hydroxy group of 4-diphosphocytidyl-2C-methyl-D-erythritol. In Verminephrobacter eiseniae (strain EF01-2), this protein is 4-diphosphocytidyl-2-C-methyl-D-erythritol kinase.